The primary structure comprises 378 residues: Stimulator of interferon genes protein (378 aa).

Topologically, residues Met-1–Arg-17 are cytoplasmic. The tract at residues Met-1–Leu-189 is mediates interaction with ZDHHC1 and ZDHHC11. The helical transmembrane segment at Ser-18–Trp-34 threads the bilayer. Residue Lys-19 forms a Glycyl lysine isopeptide (Lys-Gly) (interchain with G-Cter in ubiquitin) linkage. Residues Val-35 to Leu-44 lie on the Lumenal side of the membrane. The chain crosses the membrane as a helical span at residues Lys-45–Glu-69. Topologically, residues Leu-70–Cys-91 are cytoplasmic. S-palmitoyl cysteine attachment occurs at residues Cys-88 and Cys-91. Residues Pro-92–Tyr-106 form a helical membrane-spanning segment. The Lumenal segment spans residues Phe-107–Tyr-115. A helical transmembrane segment spans residues Leu-116–Leu-133. Over Gly-134–Ile-378 the chain is Cytoplasmic. A Glycyl lysine isopeptide (Lys-Gly) (interchain with G-Cter in ubiquitin) cross-link involves residue Lys-150. A cyclic dinucleotide-binding domain (CBD) region spans residues Leu-152 to Glu-339. Gly-165 serves as a coordination point for 3',3'-c-di-GMP. Tyr-166 contacts 2',3'-cUAMP. Residue Tyr-166 participates in 3',3'-cGAMP binding. Lys-235 is covalently cross-linked (Glycyl lysine isopeptide (Lys-Gly) (interchain with G-Cter in ubiquitin)). Arg-237 is a 2',3'-cUAMP binding site. Arg-237 serves as a coordination point for 3',3'-cGAMP. Arg-237 contributes to the 2',3'-cGAMP binding site. 3',3'-c-di-GMP-binding positions include Arg-237–Ser-240 and Thr-262. Ser-240 carries the post-translational modification Phosphoserine. Thr-262 contributes to the 2',3'-cUAMP binding site. Thr-262 provides a ligand contact to 2',3'-cGAMP. A Glycyl lysine isopeptide (Lys-Gly) (interchain with G-Cter in SUMO) cross-link involves residue Lys-337. A C-terminal tail (CTT) region spans residues Glu-339 to Ile-378. Ser-354 bears the Phosphoserine; by MAP3K7 mark. Ser-357 and Ser-365 each carry phosphoserine; by TBK1. The pLxIS motif motif lies at Leu-362–Ser-365.

It belongs to the STING family. In terms of assembly, homodimer; forms a homodimer in absence of cyclic nucleotide (c-di-GMP or cGAMP); 'Lys-63'-linked ubiquitination at Lys-150 is required for homodimerization. Homotetramer; in presence of cyclic nucleotide (c-di-GMP or cGAMP), forms tetramers and higher-order oligomers through side-by-side packing. Interacts (when phosphorylated) with IRF3; following activation and phosphorylation on the pLxIS motif by TBK1, recruits IRF3. Interacts with RIGI, MAVS and SSR2. Interacts with RNF5 and TRIM56. Interacts with TBK1; when homodimer, leading to subsequent production of IFN-beta. Interacts with IFIT1 and IFIT2. Interacts with TRIM29; this interaction induces STING1 ubiquitination and subsequent degradation. Associates with the MHC-II complex. Interacts with STEEP1; interaction takes place upon cGAMP-activation and STING1 phosphorylation by MAP3K7/TAK1 and promotes STING1 translocation to COPII vesicles. Interacts with SEC24A, SEC24B and SEC24C; promoting translocation to COPII vesicles. Interacts (when ubiquitinated) with SQSTM1; leading to relocalization to autophagosomes. Interacts with SURF4. Interacts with HNRNPA2B1. Interacts with ZDHHC1; ZDHHC1 constitutively interacts with STING1 and in presence of DNA viruses activates it by promoting its cGAMP-induced oligomerization and the recruitment of downstream signaling components. Interacts with ZDHHC11; in presence of DNA viruses promotes the recruitment of IRF3 to STING1. Interacts with TOMM70. Interacts with IFI204. Interacts with TAB1; promoting recruitment of TAB1 to the endoplasmic reticulum membrane and subsequent activation of MAP3K7/TAK1. Interacts (via transmembrane domain) with TMEM203. Interacts with DDX41. Phosphorylation by TBK1 leads to activation and production of IFN-beta. Following cyclic nucleotide (c-di-GMP or cGAMP)-binding, activation and translocation from the endoplasmic reticulum, STING1 is phosphorylated by TBK1 at Ser-365 in the pLxIS motif. The phosphorylated pLxIS motif constitutes an IRF3-binding motif, leading to recruitment of the transcription factor IRF3 to induce type-I interferons and other cytokines. The phosphorylated pLxIS motif facilitates SENP2 recruitment during late phase of viral infection. Phosphorylated on tyrosine residues upon MHC-II aggregation. Dephosphorylation by PPP6C leads to inactivation and decreased production of IFN-beta. Phosphorylation at Ser-357 is also required to activate IRF3. Phosphorylation at Ser-354 by MAP3K7/TAK1 facilitates its interaction with STEEP1, promoting STING1 translocation to COPII vesicles. In terms of processing, ubiquitinated. Ubiquitinated via 'Lys-63'-linked ubiquitin chains in response to double-stranded DNA treatment, leading to relocalization to autophagosomes and subsequent degradation; this process is dependent on SQSTM1. 'Lys-63'-linked ubiquitination mediated by TRIM56 at Lys-150 promotes homodimerization and recruitment of the antiviral kinase TBK1 and subsequent production of IFN-beta. 'Lys-48'-linked polyubiquitination at Lys-150 occurring after viral infection is mediated by RNF5 and leads to proteasomal degradation. 'Lys-11'-linked polyubiquitination at Lys-150 by RNF26 leads to stabilize STING1: it protects STING1 from RNF5-mediated 'Lys-48'-linked polyubiquitination. 'Lys-33'-linked and 'Lys-48'-linked deubiquitinated by USP20; leading to its stabilization and promotion of innate antiviral response. 'Lys-48'-linked deubiquitinated by USP44; leading to its stabilization and promotion of innate antiviral response. Deubiquitinated by USP13; leading to inhibition of innate antiviral response. 'Lys-63'-linked deubiquitinated by USP49; leading to inhibition of the subsequent recruitment of TBK1 to the signaling complex. 'Lys-63'-linked ubiquitination mediated by RNF39 promotes the activation of the cGAS-STING pathway. MARCHF5-mediated ubiquitination prevents the oxidation-induced polymer formation. Post-translationally, sumoylated at Lys-337 by TRIM38 during the early phase of viral infection, promoting its stability by preventing its relocalization to autophagosomes and subsequent degradation. Desumoylated by SENP2 during the late phase of viral infection. Palmitoylation takes place in the Golgi apparatus and creates a platform for the recruitment of TBK1. In terms of tissue distribution, present in spleen and thymus tissue. Also present in dendritic cells (at protein level).

The protein resides in the endoplasmic reticulum membrane. It localises to the cytoplasm. The protein localises to the perinuclear region. It is found in the endoplasmic reticulum-Golgi intermediate compartment membrane. Its subcellular location is the golgi apparatus membrane. The protein resides in the cytoplasmic vesicle. It localises to the autophagosome membrane. The protein localises to the mitochondrion outer membrane. It is found in the cell membrane. Its subcellular location is the lysosome membrane. It catalyses the reaction H(+)(in) = H(+)(out). Its activity is regulated as follows. Activated by anticancer drug 5,6-dimethylxanthenone 4-acetic acid (DMXAA). Specifically inhibited by nitrofuran derivatives C-178 and C-176, which covalently bind Cys-91 and prevent palmitoylation and subsequent activation od STING1. Facilitator of innate immune signaling that acts as a sensor of cytosolic DNA from bacteria and viruses and promotes the production of type I interferon (IFN-alpha and IFN-beta). Innate immune response is triggered in response to non-CpG double-stranded DNA from viruses and bacteria delivered to the cytoplasm. Acts by binding cyclic dinucleotides: recognizes and binds cyclic di-GMP (c-di-GMP), a second messenger produced by bacteria, cyclic UMP-AMP (2',3'-cUAMP), and cyclic GMP-AMP (cGAMP), a messenger produced by CGAS in response to DNA virus in the cytosol. Upon binding to c-di-GMP, cUAMP or cGAMP, STING1 oligomerizes, translocates from the endoplasmic reticulum and is phosphorylated by TBK1 on the pLxIS motif, leading to recruitment and subsequent activation of the transcription factor IRF3 to induce expression of type I interferon and exert a potent anti-viral state. Exhibits 2',3' phosphodiester linkage-specific ligand recognition: can bind both 2'-3' linked cGAMP (2'-3'-cGAMP) and 3'-3' linked cGAMP but is preferentially activated by 2'-3' linked cGAMP. The preference for 2'-3'-cGAMP, compared to other linkage isomers is probably due to the ligand itself, whichs adopts an organized free-ligand conformation that resembles the STING1-bound conformation and pays low energy costs in changing into the active conformation. In addition to promote the production of type I interferons, plays a direct role in autophagy. Following cGAMP-binding, STING1 buds from the endoplasmic reticulum into COPII vesicles, which then form the endoplasmic reticulum-Golgi intermediate compartment (ERGIC). The ERGIC serves as the membrane source for WIPI2 recruitment and LC3 lipidation, leading to formation of autophagosomes that target cytosolic DNA or DNA viruses for degradation by the lysosome. Promotes autophagy by acting as a proton channel that directs proton efflux from the Golgi to facilitate MAP1LC3B/LC3B lipidation. The autophagy- and interferon-inducing activities can be uncoupled and autophagy induction is independent of TBK1 phosphorylation. Autophagy is also triggered upon infection by bacteria: following c-di-GMP-binding, which is produced by live Gram-positive bacteria, promotes reticulophagy. May be involved in translocon function, the translocon possibly being able to influence the induction of type I interferons. May be involved in transduction of apoptotic signals via its association with the major histocompatibility complex class II (MHC-II). The protein is Stimulator of interferon genes protein of Mus musculus (Mouse).